A 226-amino-acid chain; its full sequence is Ribonuclease 3 (226 aa).

Residues 6–128 (VNQLQKKLGY…LIGAIFLDSD (123 aa)) form the RNase III domain. A Mg(2+)-binding site is contributed by E41. The active site involves D45. D114 and E117 together coordinate Mg(2+). The active site involves E117. In terms of domain architecture, DRBM spans 155-225 (DPKTRLQEYL…AEQALIQLEL (71 aa)).

The protein belongs to the ribonuclease III family. In terms of assembly, homodimer. The cofactor is Mg(2+).

The protein localises to the cytoplasm. The catalysed reaction is Endonucleolytic cleavage to 5'-phosphomonoester.. Digests double-stranded RNA. Involved in the processing of primary rRNA transcript to yield the immediate precursors to the large and small rRNAs (23S and 16S). Processes some mRNAs, and tRNAs when they are encoded in the rRNA operon. Processes pre-crRNA and tracrRNA of type II CRISPR loci if present in the organism. This Proteus mirabilis (strain HI4320) protein is Ribonuclease 3.